The chain runs to 384 residues: MAFMPPTPPKSLLGRHRLLAPSASVRVSPLCLGGMSIGNAWQGGMGECTKEMAFELLDTFYDLGGNFIDTANTYQGGESEQWIGEWMAKNNRRSEMVVSTKYTMSPKTGHPIQQSNFGGTGSKSLHLSIHNSLKALQTDYVDVLYVHCWDYATEIPELMHSLNVLINQGKVLYLGISDAPAWIVTKANMYARQNGLRPFSLYQGRYSAQERDLEREIIPMCQEEGMALQPFGVLGSGLFKSPDKPDTGARRMPPPMLIGREESLSKVLDAVAKRHNVPITSVALAYVLQKAPNVFPVLGGRKPEHLKANIEALSLELTAEDVQEIEKGYDFDIGFPHKFLGFGGMIRGPQDINILTMMGHFDYVAPKKAIRPHQGELTAPQGPA.

Position 69 (aspartate 69) interacts with NADP(+). The Proton donor role is filled by tyrosine 74. NADP(+) contacts are provided by residues 177–178 (SD), glutamine 203, and 301–309 (RKPEHLKAN).

This sequence belongs to the aldo/keto reductase family. Aldo/keto reductase 2 subfamily.

Its pathway is secondary metabolite biosynthesis. Aryl-alcohol dehydrogenase; part of the gene cluster that mediates the biosynthesis of dibenzodioxocinones such as pestalotiollide B, a novel class of inhibitors against cholesterol ester transfer protein (CEPT). The biosynthesis initiates from condensation of acetate and malonate units catalyzed by the non-reducing PKS pks8/GME11356. Pks8/GME11356 lacks a thioesterase (TE) domain, which is important to the cyclizing of the third ring of atrochrysone carboxylic acid, and the esterase GME11355 might play the role of TE and catalyzes the cyclization reaction of the C ring. The lactamase-like protein GME11357 (or other beta-lactamases in Pestalotiopsis microspora) probably hydrolyzes the thioester bond between the ACP of pks8/GME11356 and the intermediate to release atrochrysone carboxylic acid, which is spontaneously dehydrates to form endocrocin anthrone. Endocrocin anthrone is further converted to emodin via the endocrocin intermediate. Emodin is then oxidized by several enzymes such as the Baeyer-Villiger oxidase GME11358, the oxidoreductase GME11367, the short chain dehydrogenase/reductase GME11373, as well as by other oxidoreductases from the cluster, to modify the A and C rings and open the B ring, and finally yield monodictyphenone. The prenyltransferase GME11375 may catalyze the addition reaction between the C5 side chains and the carbon bone of dibenzodioxocinones. The remaining biochemical reactions to the final product dibenzodioxocinones should be methylation catalyzed by methyltransferase GME11366 and reduction and lactonization reaction catalyzed by a series of oxidordeuctases. This Pestalotiopsis microspora protein is Aryl-alcohol dehydrogenase GME11368.